The primary structure comprises 639 residues: 1-deoxy-D-xylulose-5-phosphate synthase (639 aa).

Thiamine diphosphate-binding positions include His-79 and 120-122; that span reads GHS. Residue Asp-151 participates in Mg(2+) binding. Thiamine diphosphate is bound by residues 152–153, Asn-180, Tyr-288, and Glu-370; that span reads GG. Residue Asn-180 participates in Mg(2+) binding.

Belongs to the transketolase family. DXPS subfamily. In terms of assembly, homodimer. The cofactor is Mg(2+). Thiamine diphosphate is required as a cofactor.

It carries out the reaction D-glyceraldehyde 3-phosphate + pyruvate + H(+) = 1-deoxy-D-xylulose 5-phosphate + CO2. The protein operates within metabolic intermediate biosynthesis; 1-deoxy-D-xylulose 5-phosphate biosynthesis; 1-deoxy-D-xylulose 5-phosphate from D-glyceraldehyde 3-phosphate and pyruvate: step 1/1. In terms of biological role, catalyzes the acyloin condensation reaction between C atoms 2 and 3 of pyruvate and glyceraldehyde 3-phosphate to yield 1-deoxy-D-xylulose-5-phosphate (DXP). This Methylococcus capsulatus (strain ATCC 33009 / NCIMB 11132 / Bath) protein is 1-deoxy-D-xylulose-5-phosphate synthase.